Here is a 310-residue protein sequence, read N- to C-terminus: Transcription factor LRL2 (310 aa).

2 stretches are compositionally biased toward low complexity: residues 1–20 (MNSS…LQSP) and 104–126 (QTQT…QPQT). Disordered regions lie at residues 1–23 (MNSS…PATF) and 95–143 (FHLP…PHSI). A basic motif; degenerate region spans residues 136-149 (QATDPHSIAERLRR). Residues 136-185 (QATDPHSIAERLRRERIAERMKSLQELVPNGNKTDKASMLDEIIDYVKFL) form the bHLH domain. The tract at residues 150 to 185 (ERIAERMKSLQELVPNGNKTDKASMLDEIIDYVKFL) is helix-loop-helix motif. A disordered region spans residues 203–225 (ASSQISEDAGGSHENTSSSGEAK).

Homodimer. Expressed constitutively in roots, leaves, stems, and flowers.

The protein resides in the nucleus. Its function is as follows. Transcription factor that regulates the development of root hairs. Transcription factor that regulates the development of sperm cells. This is Transcription factor LRL2 from Arabidopsis thaliana (Mouse-ear cress).